The sequence spans 353 residues: Histidinol-phosphate aminotransferase (353 aa).

The residue at position 218 (lysine 218) is an N6-(pyridoxal phosphate)lysine.

The protein belongs to the class-II pyridoxal-phosphate-dependent aminotransferase family. Histidinol-phosphate aminotransferase subfamily. Homodimer. Requires pyridoxal 5'-phosphate as cofactor.

The enzyme catalyses L-histidinol phosphate + 2-oxoglutarate = 3-(imidazol-4-yl)-2-oxopropyl phosphate + L-glutamate. It functions in the pathway amino-acid biosynthesis; L-histidine biosynthesis; L-histidine from 5-phospho-alpha-D-ribose 1-diphosphate: step 7/9. In Synechococcus sp. (strain JA-3-3Ab) (Cyanobacteria bacterium Yellowstone A-Prime), this protein is Histidinol-phosphate aminotransferase.